Consider the following 497-residue polypeptide: Carboxylesterase (497 aa).

Residue Ser185 is the Acyl-ester intermediate of the active site. Active-site charge relay system residues include Glu319 and His415.

This sequence belongs to the type-B carboxylesterase/lipase family.

It is found in the secreted. The catalysed reaction is a carboxylic ester + H2O = an alcohol + a carboxylate + H(+). The chain is Carboxylesterase from Thermobifida fusca (strain YX).